The following is a 117-amino-acid chain: UPF0145 protein CV_4322 (117 aa).

It belongs to the UPF0145 family.

The chain is UPF0145 protein CV_4322 from Chromobacterium violaceum (strain ATCC 12472 / DSM 30191 / JCM 1249 / CCUG 213 / NBRC 12614 / NCIMB 9131 / NCTC 9757 / MK).